A 599-amino-acid chain; its full sequence is Elongation factor 4 (599 aa).

Residues 5 to 187 (SHIRNFSIIA…ELVRLVPPPT (183 aa)) enclose the tr-type G domain. Residues 17-22 (DHGKST) and 134-137 (NKMD) each bind GTP.

This sequence belongs to the TRAFAC class translation factor GTPase superfamily. Classic translation factor GTPase family. LepA subfamily.

It localises to the cell inner membrane. It carries out the reaction GTP + H2O = GDP + phosphate + H(+). Required for accurate and efficient protein synthesis under certain stress conditions. May act as a fidelity factor of the translation reaction, by catalyzing a one-codon backward translocation of tRNAs on improperly translocated ribosomes. Back-translocation proceeds from a post-translocation (POST) complex to a pre-translocation (PRE) complex, thus giving elongation factor G a second chance to translocate the tRNAs correctly. Binds to ribosomes in a GTP-dependent manner. This Cellvibrio japonicus (strain Ueda107) (Pseudomonas fluorescens subsp. cellulosa) protein is Elongation factor 4.